The following is a 679-amino-acid chain: Stress-70 protein, mitochondrial (679 aa).

A mitochondrion-targeting transit peptide spans 1–46; sequence MISASRAAVSRFVGTAASRGPTAARHQDGWNGLSHEAFRIVSRRDY. The tract at residues 1-432 is interaction with NFS1; it reads MISASRAAVS…IQGGVLAGDV (432 aa). The ADP site is built by threonine 63 and asparagine 64. The tract at residues 63-431 is nucleotide-binding domain (NBD); it reads TNSCVAVMEG…AIQGGVLAGD (369 aa). Position 76 is an N6-acetyllysine (lysine 76). The residue at position 87 (threonine 87) is a Phosphothreonine. N6-acetyllysine; alternate is present on residues lysine 135 and lysine 138. Lysine 135 and lysine 138 each carry N6-succinyllysine; alternate. Lysine 143 is subject to N6-acetyllysine. The residue at position 206 (lysine 206) is an N6-acetyllysine; alternate. Residue lysine 206 is modified to N6-succinyllysine; alternate. The residue at position 206 (lysine 206) is an N6-malonyllysine; alternate. 2 positions are modified to N6-acetyllysine: lysine 234 and lysine 288. An N6-acetyllysine; alternate modification is found at lysine 300. An N6-succinyllysine; alternate modification is found at lysine 300. The ADP site is built by glutamate 313, lysine 316, and serine 320. Residue lysine 368 is modified to N6-succinyllysine. ADP is bound by residues glycine 388 and arginine 391. Lysine 394 carries the post-translational modification N6-succinyllysine. At serine 408 the chain carries Phosphoserine. An interdomain linker region spans residues 432–441; that stretch reads VTDVLLLDVT. Residues 432 to 679 form an interaction with FXN and ISCU region; the sequence is VTDVLLLDVT…QKDNQKEEKQ (248 aa). Positions 442–679 are substrate-binding domain (SBD); it reads PLSLGIETLG…QKDNQKEEKQ (238 aa). At arginine 513 the chain carries Omega-N-methylarginine. Residues lysine 567 and lysine 600 each carry the N6-acetyllysine; alternate modification. An N6-succinyllysine; alternate mark is found at lysine 567 and lysine 600. Lysine 610 is subject to N6-succinyllysine. Position 612 is an N6-acetyllysine (lysine 612). The residue at position 646 (lysine 646) is an N6-acetyllysine; alternate. Position 646 is an N6-succinyllysine; alternate (lysine 646). The segment at 656 to 679 is disordered; sequence ASEREGSGSSGTGEQKDNQKEEKQ. Basic and acidic residues predominate over residues 669–679; it reads EQKDNQKEEKQ.

The protein belongs to the heat shock protein 70 family. In terms of assembly, interacts strongly with the intermediate form of FXN and weakly with its mature form. Interacts with HSCB. Associates with the mitochondrial contact site and cristae organizing system (MICOS) complex, composed of at least MICOS10/MIC10, CHCHD3/MIC19, CHCHD6/MIC25, APOOL/MIC27, IMMT/MIC60, APOO/MIC23/MIC26 and QIL1/MIC13. This complex was also known under the names MINOS or MitOS complex. The MICOS complex associates with mitochondrial outer membrane proteins SAMM50, MTX1, MTX2 and DNAJC11, mitochondrial inner membrane protein TMEM11 and with HSPA9. Interacts with DNLZ, the interaction is required to prevent self-aggregation. Interacts with TESPA1. Interacts with PDPN. Interacts with NFU1, NFS1 and ISCU. Interacts with TP53; the interaction promotes TP53 degradation. Interacts (via SBD domain) with UBXN2A; the interaction with UBXN2A inhibits HSPA9/MOT-2 interaction with and degradation of TP53, thereby promotes TP53 translocation to the nucleus. Interacts with ITPR1 AND VDAC1; this interaction couples ITPR1 to VDAC1. Component of the TIM23 mitochondrial inner membrane pre-sequence translocase complex.

The protein localises to the mitochondrion. It localises to the nucleus. The protein resides in the nucleolus. Its subcellular location is the cytoplasm. It is found in the mitochondrion matrix. It carries out the reaction ATP + H2O = ADP + phosphate + H(+). Its activity is regulated as follows. The chaperone activity is regulated by ATP-induced allosteric coupling of the nucleotide-binding (NBD) and substrate-binding (SBD) domains. ATP binding in the NBD leads to a conformational change in the NBD, which is transferred through the interdomain linker (IDL) to the substrate-binding domain (SBD). This elicits a reduced substrate affinity and a faster substrate exchange rate. Upon hydrolysis of ATP to ADP, the protein undergoes a conformational change that increases its affinity for substrate proteins. It cycles through repeated phases of ATP hydrolysis and nucleotide exchange, facilitating repeated cycles of substrate binding and release. Functions in collaboration with co-chaperones. Functions with the co-chaperone, DNLZ, to maintain solubility and regulate ATP hydrolysis. Nucleotide exchange factors, GRPEL1 and GRPEL2, accelerate nucleotide exchange. Its function is as follows. Mitochondrial chaperone that plays a key role in mitochondrial protein import, folding, and assembly. Plays an essential role in the protein quality control system, the correct folding of proteins, the re-folding of misfolded proteins, and the targeting of proteins for subsequent degradation. These processes are achieved through cycles of ATP binding, ATP hydrolysis, and ADP release, mediated by co-chaperones. In mitochondria, it associates with the TIM (translocase of the inner membrane) protein complex to assist in the import and folding of mitochondrial proteins. Plays an important role in mitochondrial iron-sulfur cluster (ISC) biogenesis, interacts with and stabilizes ISC cluster assembly proteins FXN, NFU1, NFS1 and ISCU. Regulates erythropoiesis via stabilization of ISC assembly. Regulates mitochondrial calcium-dependent apoptosis by coupling two calcium channels, ITPR1 and VDAC1, at the mitochondria-associated endoplasmic reticulum (ER) membrane to facilitate calcium transport from the ER lumen to the mitochondria intermembrane space, providing calcium for the downstream calcium channel MCU, which releases it into the mitochondrial matrix. Although primarily located in the mitochondria, it is also found in other cellular compartments. In the cytosol, it associates with proteins involved in signaling, apoptosis, or senescence. It may play a role in cell cycle regulation via its interaction with and promotion of degradation of TP53. May play a role in the control of cell proliferation and cellular aging. Protects against reactive oxygen species (ROS). Extracellular HSPA9 plays a cytoprotective role by preventing cell lysis following immune attack by the membrane attack complex by disrupting formation of the complex. This Bos taurus (Bovine) protein is Stress-70 protein, mitochondrial.